Here is a 529-residue protein sequence, read N- to C-terminus: Glucose-6-phosphate isomerase (529 aa).

Glutamate 323 serves as the catalytic Proton donor. Active-site residues include histidine 352 and lysine 456.

The protein belongs to the GPI family.

The protein resides in the cytoplasm. The enzyme catalyses alpha-D-glucose 6-phosphate = beta-D-fructose 6-phosphate. It participates in carbohydrate biosynthesis; gluconeogenesis. The protein operates within carbohydrate degradation; glycolysis; D-glyceraldehyde 3-phosphate and glycerone phosphate from D-glucose: step 2/4. In terms of biological role, catalyzes the reversible isomerization of glucose-6-phosphate to fructose-6-phosphate. In Geobacter sulfurreducens (strain ATCC 51573 / DSM 12127 / PCA), this protein is Glucose-6-phosphate isomerase.